The sequence spans 217 residues: Photosynthetic NDH subunit of lumenal location 4, chloroplastic (217 aa).

Residues 1-34 constitute a chloroplast transit peptide; sequence MAISTLTLTQSLYTRSFRPTIFFSSSSSSSFSCL. 2 cysteine pairs are disulfide-bonded: Cys-87–Cys-99 and Cys-188–Cys-193. Residues 112-211 enclose the PPIase FKBP-type domain; that stretch reads GVLVNIHYTA…LYDINFVEIY (100 aa).

Belongs to the FKBP-type PPIase family. As to quaternary structure, part of the chloroplast NDH complex, composed of a mixture of chloroplast and nucleus encoded subunits. Component of the NDH lumenal subcomplex, at least composed of PnsL1, PnsL2, PnsL3, PnsL4 and PnsL5.

The protein resides in the plastid. It is found in the chloroplast thylakoid lumen. The catalysed reaction is [protein]-peptidylproline (omega=180) = [protein]-peptidylproline (omega=0). NDH shuttles electrons from NAD(P)H:plastoquinone, via FMN and iron-sulfur (Fe-S) centers, to quinones in the photosynthetic chain and possibly in a chloroplast respiratory chain. The immediate electron acceptor for the enzyme in this species is believed to be plastoquinone. Couples the redox reaction to proton translocation, and thus conserves the redox energy in a proton gradient. PPIases accelerate the folding of proteins. It catalyzes the cis-trans isomerization of proline imidic peptide bonds in oligopeptides. Seems to be essential for stabilizing the NDH subcomplex A. The chain is Photosynthetic NDH subunit of lumenal location 4, chloroplastic from Arabidopsis thaliana (Mouse-ear cress).